The sequence spans 866 residues: Retinoblastoma-related protein 2 (866 aa).

The domain A stretch occupies residues 274 to 475 (TPITSAMTTA…EKGSSLYNSL (202 aa)). A pocket region spans residues 274–721 (TPITSAMTTA…NEVFVPAAKP (448 aa)). Positions 476 to 593 (IVARPSVASE…PVGGNEKCAD (118 aa)) are spacer. Residues 513-551 (LPATPSKKRAAGRDDNADPRSPKRPCNESRSPVVEHNLQ) are disordered. Basic and acidic residues predominate over residues 523-539 (AGRDDNADPRSPKRPCN). Residues 594-721 (VTIQIFFSKI…NEVFVPAAKP (128 aa)) form a domain B region. 2 disordered regions span residues 731–754 (TRPE…PFPN) and 839–866 (SLGQ…KPDT). Residues 841–850 (GQPNGGSTSL) are compositionally biased toward polar residues.

Belongs to the retinoblastoma protein (RB) family. Ubiquitous.

It localises to the nucleus. Its function is as follows. Regulator of biological processes that recruits a histone deacetylase to control gene transcription. May play a role in the entry into mitosis, negatively regulating the cell proliferation. Formation of stable complexes with geminiviridae replication-associated proteins may create a cellular environment which favors viral DNA replication. In Zea mays (Maize), this protein is Retinoblastoma-related protein 2 (RBR2).